Here is a 432-residue protein sequence, read N- to C-terminus: D-amino acid dehydrogenase (432 aa).

An FAD-binding site is contributed by 3–17 (VVILGSGVVGVTSAW).

The protein belongs to the DadA oxidoreductase family. FAD is required as a cofactor.

It carries out the reaction a D-alpha-amino acid + A + H2O = a 2-oxocarboxylate + AH2 + NH4(+). The protein operates within amino-acid degradation; D-alanine degradation; NH(3) and pyruvate from D-alanine: step 1/1. Functionally, oxidative deamination of D-amino acids. The chain is D-amino acid dehydrogenase from Salmonella paratyphi C (strain RKS4594).